The following is a 659-amino-acid chain: Beta-galactosidase BgaA (659 aa).

Arginine 103 serves as a coordination point for substrate. Cysteine 107 provides a ligand contact to Zn(2+). Asparagine 141 contributes to the substrate binding site. Glutamate 142 serves as the catalytic Proton donor. Cysteine 148, cysteine 150, and cysteine 153 together coordinate Zn(2+). Glutamate 298 acts as the Nucleophile in catalysis. Residue tryptophan 307 coordinates substrate.

The protein belongs to the glycosyl hydrolase 42 family. Dimer.

The catalysed reaction is Hydrolysis of terminal non-reducing beta-D-galactose residues in beta-D-galactosides.. Inhibited by Cu(2+), Hg(2+) and Zn(2+). No effect with Ca(2+), Mg(2+), Mn(2+) or excess EDTA (10 mM). Functionally, involved in plant cell wall degradation in cooperation with cellulosome. Hydrolyzes both p-nitrophenyl-alpha-L-arabinopyranoside (pNPAp) and p-nitrophenyl-beta-D-galactopyranoside (pNPGp), with higher activity for pNPAp. Shows hydrolysis activity against p-nitrophenyl-beta-D-fucopyranoside (pNPFp), but not against p-nitrophenyl-alpha-L-arabinofuranoside (pNPAf), o-nitrophenyl-beta-D-galactopyranoside (oNPGp), p-nitrophenyl-beta-D-xylopyranoside (pNPXp), p-nitrophenyl-beta-D-glucopyranoside (pNPGLp), p-nitrophenyl-beta-D-cellobiopyranoside (pNPCp), p-nitrophenyl-beta-lactopyranoside (pNPLp) or p-nitrophenyl-alpha-galactopyranoside (pNPalphaGp). No detectable activity against arabinan or arabinoxylan, but activity against arabinogalactan can be detected. Increases degradation activity of alpha-L-arabinofuranosidase (ArfA) and endo-1,4-beta-xylanase (XynA) when corn fiber gum and corn stem powder are used as substrates. This is Beta-galactosidase BgaA (bgaA) from Clostridium cellulovorans (strain ATCC 35296 / DSM 3052 / OCM 3 / 743B).